Reading from the N-terminus, the 307-residue chain is Probable inactive peptidyl-prolyl cis-trans isomerase-like 6 (307 aa).

The PPIase cyclophilin-type domain occupies 141 to 304; that stretch reads FLDISIDLYP…QNCVITASGQ (164 aa).

This sequence belongs to the cyclophilin-type PPIase family.

Its function is as follows. Probable inactive PPIase with no peptidyl-prolyl cis-trans isomerase activity. This Bos taurus (Bovine) protein is Probable inactive peptidyl-prolyl cis-trans isomerase-like 6.